Here is a 210-residue protein sequence, read N- to C-terminus: Orotate phosphoribosyltransferase (210 aa).

5-phospho-alpha-D-ribose 1-diphosphate-binding positions include arginine 97, lysine 98, and asparagine 125–serine 133. Residues serine 129 and arginine 157 each coordinate orotate.

It belongs to the purine/pyrimidine phosphoribosyltransferase family. PyrE subfamily. As to quaternary structure, homodimer. The cofactor is Mg(2+).

The catalysed reaction is orotidine 5'-phosphate + diphosphate = orotate + 5-phospho-alpha-D-ribose 1-diphosphate. The protein operates within pyrimidine metabolism; UMP biosynthesis via de novo pathway; UMP from orotate: step 1/2. In terms of biological role, catalyzes the transfer of a ribosyl phosphate group from 5-phosphoribose 1-diphosphate to orotate, leading to the formation of orotidine monophosphate (OMP). The chain is Orotate phosphoribosyltransferase from Chlamydia pneumoniae (Chlamydophila pneumoniae).